The chain runs to 563 residues: Endogenous retroviral envelope protein HEMO (563 aa).

The signal sequence occupies residues 1–26; that stretch reads MGSLSNYALLQLTLTAFLTILVQPQH. Topologically, residues 27 to 488 are extracellular; it reads LLAPVFRTLS…IFAKVGDWFR (462 aa). N-linked (GlcNAc...) asparagine glycans are attached at residues asparagine 122 and asparagine 192. Residues 489–509 form a helical membrane-spanning segment; it reads SWGYVLLIVLFCLFIFVLIYV. Over 510 to 563 the chain is Cytoplasmic; sequence RVFRKSRRSLNSQPLNLALSPQQSAQLLVSETSCQVSNRAMKGLTTHQYDTSLL.

The protein belongs to the gamma type-C retroviral envelope protein family. N-glycosylated. Post-translationally, cleaved by some metalloproteinase at 432-Gln-Arg-433 (mainly) or 433-Arg-Gln-434, leading to release the secreted form (Endogenous retroviral envelope protein HEMO, secreted form) in the extracellular medium. Expressed at high level in the placenta and stem cells (at protein level). Also expressed in the kidney but at a lower level. Endogenous retroviral envelope protein HEMO, secreted form: Present in the blood of pregnant women (at protein level).

It is found in the cell membrane. The protein resides in the secreted. Its function is as follows. Endogenous envelope proteins originate from retroviral envelope proteins, which mediate receptor recognition and membrane fusion during early infection. Endogenous envelope proteins may have kept, lost or modified their original function during evolution. The sequence is that of Endogenous retroviral envelope protein HEMO from Homo sapiens (Human).